Here is a 649-residue protein sequence, read N- to C-terminus: ATP-dependent zinc metalloprotease FtsH (649 aa).

The Cytoplasmic segment spans residues M1–N18. Residues N19–F39 traverse the membrane as a helical segment. At K40–N115 the chain is on the periplasmic side. A helical transmembrane segment spans residues V116–Y136. Topologically, residues M137–V649 are cytoplasmic. Residue G210–T217 participates in ATP binding. Position 432 (H432) interacts with Zn(2+). The active site involves E433. Positions 436 and 508 each coordinate Zn(2+). The interval I606–V649 is disordered. Residues R616 to N626 are compositionally biased toward low complexity.

This sequence in the central section; belongs to the AAA ATPase family. It in the C-terminal section; belongs to the peptidase M41 family. In terms of assembly, homohexamer. The cofactor is Zn(2+).

The protein resides in the cell inner membrane. Acts as a processive, ATP-dependent zinc metallopeptidase for both cytoplasmic and membrane proteins. Plays a role in the quality control of integral membrane proteins. The polypeptide is ATP-dependent zinc metalloprotease FtsH (Cupriavidus metallidurans (strain ATCC 43123 / DSM 2839 / NBRC 102507 / CH34) (Ralstonia metallidurans)).